Here is a 676-residue protein sequence, read N- to C-terminus: tRNA uridine 5-carboxymethylaminomethyl modification enzyme MnmG (676 aa).

Position 15–20 (15–20 (GAGHAG)) interacts with FAD. NAD(+) is bound at residue 316 to 330 (GPRYCPSIEDKIVRF).

This sequence belongs to the MnmG family. As to quaternary structure, homodimer. Heterotetramer of two MnmE and two MnmG subunits. Requires FAD as cofactor.

It localises to the cytoplasm. Functionally, NAD-binding protein involved in the addition of a carboxymethylaminomethyl (cmnm) group at the wobble position (U34) of certain tRNAs, forming tRNA-cmnm(5)s(2)U34. This is tRNA uridine 5-carboxymethylaminomethyl modification enzyme MnmG from Roseiflexus castenholzii (strain DSM 13941 / HLO8).